The chain runs to 939 residues: Isoleucine--tRNA ligase (939 aa).

A 'HIGH' region motif is present at residues 58–68 (PYANGNIHIGH). E562 provides a ligand contact to L-isoleucyl-5'-AMP. The 'KMSKS' region signature appears at 603-607 (KMSKS). K606 contacts ATP. Zn(2+) contacts are provided by C903, C906, C922, and C925.

Belongs to the class-I aminoacyl-tRNA synthetase family. IleS type 1 subfamily. In terms of assembly, monomer. The cofactor is Zn(2+).

The protein localises to the cytoplasm. It catalyses the reaction tRNA(Ile) + L-isoleucine + ATP = L-isoleucyl-tRNA(Ile) + AMP + diphosphate. Catalyzes the attachment of isoleucine to tRNA(Ile). As IleRS can inadvertently accommodate and process structurally similar amino acids such as valine, to avoid such errors it has two additional distinct tRNA(Ile)-dependent editing activities. One activity is designated as 'pretransfer' editing and involves the hydrolysis of activated Val-AMP. The other activity is designated 'posttransfer' editing and involves deacylation of mischarged Val-tRNA(Ile). The sequence is that of Isoleucine--tRNA ligase from Buchnera aphidicola subsp. Baizongia pistaciae (strain Bp).